A 328-amino-acid chain; its full sequence is UPF0194 membrane protein YPA_1093 (328 aa).

Residues 1 to 22 form the signal peptide; the sequence is MNRKKIIVAAVIVALLATLAYG. 2 coiled-coil regions span residues 80–109 and 141–209; these read YLNA…REEE and KAVS…ILLA.

This sequence belongs to the UPF0194 family.

It is found in the periplasm. This is UPF0194 membrane protein YPA_1093 from Yersinia pestis bv. Antiqua (strain Antiqua).